The sequence spans 469 residues: Programmed cell death protein 4 (469 aa).

The residue at position 1 (Met1) is an N-acetylmethionine. Disordered stretches follow at residues Met1 to Asn30 and Lys58 to Gly128. Over residues Gln7–Leu23 the composition is skewed to polar residues. Ser25 is modified (phosphoserine). Residues Lys58 to Arg64 carry the Nuclear localization signal motif. A Phosphoserine; by PKB and RPS6KB1 modification is found at Ser67. Phosphoserine is present on residues Ser68, Ser71, Ser76, Ser78, and Ser94. The Phosphodegron motif lies at Asp70–Ser76. Positions Lys114–Gly125 are enriched in gly residues. A Phosphotyrosine modification is found at Tyr152. The 122-residue stretch at Ala163–Gly284 folds into the MI 1 domain. 2 positions are modified to phosphoserine: Ser313 and Ser317. Residues His326–Ser449 form the MI 2 domain. A Nuclear localization signal motif is present at residues Pro448–Arg454. At Ser457 the chain carries Phosphoserine.

The protein belongs to the PDCD4 family. As to quaternary structure, interacts (via MI domains) with EIF4A2. Interacts (via MI domains) with EIF4A1 (via N-terminal domain). Heterotrimer with EIF4A1; one molecule of PDCD4 binds two molecules of EIF4A1. Interacts with EIF4G1. May form a complex with EIF4A1 and EIF4G1. The interaction between PDCD4 and EIF4A1 interferes with the interaction between EIF4A1 and EIF4G. When phosphorylated, interacts with BTRC and FBXW11. Polyubiquitinated, leading to its proteasomal degradation. Rapidly degraded in response to mitogens. Phosphorylation of the phosphodegron promotes interaction with BTRC and proteasomal degradation. In terms of processing, phosphorylated at Ser-67 by RPS6KB1 in response to mitogens; phosphorylation promotes proteasomal degradation of PDCD4.

It localises to the nucleus. It is found in the cytoplasm. Its function is as follows. Inhibits translation initiation and cap-dependent translation. May excert its function by hindering the interaction between EIF4A1 and EIF4G. Inhibits the helicase activity of EIF4A. Modulates the activation of JUN kinase. Down-regulates the expression of MAP4K1, thus inhibiting events important in driving invasion, namely, MAPK85 activation and consequent JUN-dependent transcription. May play a role in apoptosis. Tumor suppressor. Inhibits tumor promoter-induced neoplastic transformation. Binds RNA. The chain is Programmed cell death protein 4 (Pdcd4) from Rattus norvegicus (Rat).